The primary structure comprises 108 residues: uncharacterized protein (108 aa).

Residues 74-108 (TGSKKRDSKANSRSRPSGTITSRGARIGLQGYKSH) form a disordered region. The span at 84–95 (NSRSRPSGTITS) shows a compositional bias: polar residues.

This is an uncharacterized protein from Saccharomyces cerevisiae (strain ATCC 204508 / S288c) (Baker's yeast).